A 533-amino-acid chain; its full sequence is D-2-hydroxyglutarate dehydrogenase, mitochondrial (533 aa).

The transit peptide at Met1–Gly55 directs the protein to the mitochondrion. The FAD-binding PCMH-type domain occupies Val107–Lys286. Residues Arg397, Thr401, and Lys412 each coordinate (R)-2-hydroxyglutarate. (R)-lactate is bound at residue Arg397. (R)-malate is bound by residues Arg397, Thr401, and Lys412. His445 and His452 together coordinate Zn(2+). Asn454 provides a ligand contact to (R)-2-hydroxyglutarate. Position 486 (Glu486) interacts with Zn(2+). His487 is a (R)-2-hydroxyglutarate binding site. His487 provides a ligand contact to (R)-lactate. His487 serves as a coordination point for (R)-malate.

It belongs to the FAD-binding oxidoreductase/transferase type 4 family. FAD is required as a cofactor.

It is found in the mitochondrion. The enzyme catalyses (R)-2-hydroxyglutarate + A = 2-oxoglutarate + AH2. It carries out the reaction (R)-malate + A = oxaloacetate + AH2. Functionally, catalyzes the oxidation of D-2-hydroxyglutarate (D-2-HG) to alpha-ketoglutarate. Also catalyzes the oxidation of other D-2-hydroxyacids, such as D-malate (D-MAL) and D-lactate (D-LAC). Exhibits high activities towards D-2-HG and D-MAL but a very weak activity towards D-LAC. The protein is D-2-hydroxyglutarate dehydrogenase, mitochondrial (d2hgdh) of Danio rerio (Zebrafish).